A 508-amino-acid polypeptide reads, in one-letter code: Cytochrome P450 4A12 (508 aa).

2 consecutive transmembrane segments (helical) span residues 10–30 (IFPGSILGFLQIATVLTVLLL) and 120–140 (FLAPWIGYGLLLLNGQTWFQH). Glu319 is a heme binding site. Ser438 is modified (phosphoserine). Position 455 (Cys455) interacts with heme.

It belongs to the cytochrome P450 family. It depends on heme as a cofactor. In terms of tissue distribution, expressed at proximal straight tubules and preglomerular arteries of the outer medulla as well in the cortex regions of kidney (at protein level).

It is found in the endoplasmic reticulum membrane. The protein resides in the microsome membrane. The enzyme catalyses an organic molecule + reduced [NADPH--hemoprotein reductase] + O2 = an alcohol + oxidized [NADPH--hemoprotein reductase] + H2O + H(+). It catalyses the reaction dodecanoate + reduced [NADPH--hemoprotein reductase] + O2 = 12-hydroxydodecanoate + oxidized [NADPH--hemoprotein reductase] + H2O + H(+). The catalysed reaction is dodecanoate + reduced [NADPH--hemoprotein reductase] + O2 = (11R)-hydroxydodecanoate + oxidized [NADPH--hemoprotein reductase] + H2O + H(+). It carries out the reaction (5Z,8Z,11Z,14Z)-eicosatetraenoate + reduced [NADPH--hemoprotein reductase] + O2 = 20-hydroxy-(5Z,8Z,11Z,14Z)-eicosatetraenoate + oxidized [NADPH--hemoprotein reductase] + H2O + H(+). The enzyme catalyses prostaglandin A1 + reduced [NADPH--hemoprotein reductase] + O2 = 20-hydroxy prostaglandin A1 + oxidized [NADPH--hemoprotein reductase] + H2O + H(+). Its pathway is lipid metabolism; fatty acid metabolism. Its activity is regulated as follows. Activated by cytochrome b5 and phosphatidylserine. Functionally, a cytochrome P450 monooxygenase involved in the metabolism of fatty acids. Catalyzes predominantly the oxidation of the terminal carbon (omega-oxidation) of saturated and unsaturated fatty acids. May act as a major omega-hydroxylase for dodecanoic (lauric) acid in kidney. At preglomerular arteries, may participate in omega-hydroxylation of (5Z,8Z,11Z,14Z)-eicosatetraenoic acid (arachidonate) to 20-hydroxyeicosatetraenoic acid (20-HETE), a signaling molecule acting both as vasoconstrictive and natriuretic with overall effect on arterial blood pressure. Can also catalyze the oxidation of the penultimate carbon (omega-1 oxidation) of fatty acids with lower efficiency, displaying a preference for the (R)-stereoisomer. Mechanistically, uses molecular oxygen inserting one oxygen atom into a substrate, and reducing the second into a water molecule, with two electrons provided by NADPH via cytochrome P450 reductase (NADPH--hemoprotein reductase). The polypeptide is Cytochrome P450 4A12 (Cyp4a12) (Rattus norvegicus (Rat)).